A 192-amino-acid chain; its full sequence is 3-hydroxyanthranilate 3,4-dioxygenase 1 (192 aa).

R50 contributes to the O2 binding site. Residues H54, E60, and H102 each contribute to the Fe cation site. E60 contacts substrate. Residues R106 and E116 each contribute to the substrate site. A divalent metal cation is bound by residues C131, C134, C168, and C171.

Belongs to the 3-HAO family. Requires Fe(2+) as cofactor.

It localises to the cytoplasm. It carries out the reaction 3-hydroxyanthranilate + O2 = (2Z,4Z)-2-amino-3-carboxymuconate 6-semialdehyde. The protein operates within cofactor biosynthesis; NAD(+) biosynthesis; quinolinate from L-kynurenine: step 3/3. Its function is as follows. Catalyzes the oxidative ring opening of 3-hydroxyanthranilate to 2-amino-3-carboxymuconate semialdehyde, which spontaneously cyclizes to quinolinate. The chain is 3-hydroxyanthranilate 3,4-dioxygenase 1 (bna1-1) from Aspergillus fumigatus (strain CBS 144.89 / FGSC A1163 / CEA10) (Neosartorya fumigata).